The sequence spans 174 residues: uncharacterized protein (174 aa).

This is an uncharacterized protein from Saccharomyces cerevisiae (strain ATCC 204508 / S288c) (Baker's yeast).